We begin with the raw amino-acid sequence, 547 residues long: Sodium-coupled neutral amino acid transporter 4 (547 aa).

The segment at methionine 1–aspartate 34 is disordered. Over methionine 1–glycine 104 the chain is Extracellular. Polar residues predominate over residues serine 19 to glutamate 31. Serine 49 carries the phosphoserine modification. A helical membrane pass occupies residues isoleucine 105–leucine 125. The Cytoplasmic portion of the chain corresponds to leucine 126–lysine 151. A helical membrane pass occupies residues isoleucine 152–isoleucine 172. The Extracellular portion of the chain corresponds to isoleucine 173–tyrosine 195. A helical transmembrane segment spans residues leucine 196 to leucine 216. The Cytoplasmic portion of the chain corresponds to lysine 217 to glycine 220. A helical transmembrane segment spans residues tyrosine 221 to isoleucine 241. Topologically, residues tyrosine 242–threonine 332 are extracellular. A disulfide bridge links cysteine 249 with cysteine 321. N-linked (GlcNAc...) asparagine glycosylation is found at asparagine 260, asparagine 264, and asparagine 276. Residues alanine 333–tyrosine 353 traverse the membrane as a helical segment. The Cytoplasmic portion of the chain corresponds to serine 354–asparagine 369. A helical transmembrane segment spans residues isoleucine 370–phenylalanine 390. At tyrosine 391–alanine 411 the chain is on the extracellular side. Residues leucine 412–phenylalanine 432 form a helical membrane-spanning segment. At proline 433–histidine 453 the chain is on the cytoplasmic side. A helical transmembrane segment spans residues phenylalanine 454–isoleucine 474. At lysine 475–tyrosine 476 the chain is on the extracellular side. A helical membrane pass occupies residues isoleucine 477–phenylalanine 497. Residues tyrosine 498–glycine 514 lie on the Cytoplasmic side of the membrane. The chain crosses the membrane as a helical span at residues alanine 515–leucine 535. The Extracellular portion of the chain corresponds to aspartate 536–histidine 547.

It belongs to the amino acid/polyamine transporter 2 family. In terms of processing, the disulfide bond plays an important role in substrate transport, but has no effect on trafficking to the cell surface. Detected in liver, in hepatocytes surrounding the central vein. Not detected in heart, kidney, brain, lung, small intestine, spleen and thymus. Highly expressed in placenta.

Its subcellular location is the cell membrane. The protein localises to the cell projection. It is found in the microvillus membrane. It catalyses the reaction L-alanine(in) + Na(+)(in) = L-alanine(out) + Na(+)(out). The enzyme catalyses L-methionine(in) + Na(+)(in) = L-methionine(out) + Na(+)(out). It carries out the reaction L-asparagine(in) + Na(+)(in) = L-asparagine(out) + Na(+)(out). The catalysed reaction is L-threonine(in) + Na(+)(in) = L-threonine(out) + Na(+)(out). It catalyses the reaction L-serine(in) + Na(+)(in) = L-serine(out) + Na(+)(out). The enzyme catalyses glycine(in) + Na(+)(in) = glycine(out) + Na(+)(out). It carries out the reaction L-glutamine(in) + Na(+)(in) = L-glutamine(out) + Na(+)(out). The catalysed reaction is L-histidine(in) + Na(+)(in) = L-histidine(out) + Na(+)(out). It catalyses the reaction L-cysteine(in) + Na(+)(in) = L-cysteine(out) + Na(+)(out). The enzyme catalyses L-proline(in) + Na(+)(in) = L-proline(out) + Na(+)(out). Its function is as follows. Symporter that cotransports neutral amino acids and sodium ions from the extraccellular to the intracellular side of the cell membrane. The transport is electrogenic, pH dependent and partially tolerates substitution of Na(+) by Li(+). Preferentially transports smaller amino acids, such as glycine, L-alanine, L-serine, L-asparagine and L-threonine, followed by L-cysteine, L-histidine, L-proline and L-glutamine and L-methionine. This Mus musculus (Mouse) protein is Sodium-coupled neutral amino acid transporter 4.